Consider the following 64-residue polypeptide: Large ribosomal subunit protein uL29 (64 aa).

The protein belongs to the universal ribosomal protein uL29 family.

The chain is Large ribosomal subunit protein uL29 from Dichelobacter nodosus (strain VCS1703A).